The sequence spans 104 residues: L-rhamnose mutarotase (104 aa).

Residue Y18 coordinates substrate. H22 functions as the Proton donor in the catalytic mechanism. Substrate-binding positions include Y41 and 76-77 (WW).

The protein belongs to the rhamnose mutarotase family. As to quaternary structure, homodimer.

Its subcellular location is the cytoplasm. It catalyses the reaction alpha-L-rhamnose = beta-L-rhamnose. It participates in carbohydrate metabolism; L-rhamnose metabolism. Its function is as follows. Involved in the anomeric conversion of L-rhamnose. The polypeptide is L-rhamnose mutarotase (Mannheimia succiniciproducens (strain KCTC 0769BP / MBEL55E)).